A 41-amino-acid chain; its full sequence is Submaxillary gland androgen-regulated protein 2, isoform beta (41 aa).

The signal sequence occupies residues 1 to 22; that stretch reads MKALYMVFVLWVLIGCFLRLLK.

It is found in the secreted. May play a role in protection or detoxification. The polypeptide is Submaxillary gland androgen-regulated protein 2, isoform beta (Smr2) (Mus musculus (Mouse)).